The following is a 293-amino-acid chain: 2-pyrone-4,6-dicarboxylate hydrolase (293 aa).

Residues methionine 1–threonine 20 form a disordered region. Substrate is bound by residues histidine 29–histidine 31, tyrosine 47, serine 75, arginine 122, arginine 128, tyrosine 154, and histidine 178. Aspartate 246 serves as the catalytic Proton acceptor. Residue asparagine 251 coordinates substrate.

It belongs to the metallo-dependent hydrolases superfamily. PDC hydrolase family. In terms of assembly, monomer.

The enzyme catalyses 2-oxo-2H-pyran-4,6-dicarboxylate + H2O = (1E)-4-oxobut-1-ene-1,2,4-tricarboxylate + H(+). The protein operates within secondary metabolite metabolism; lignin degradation. With respect to regulation, strongly inhibited by 1 mM Zn(2+) ions. Also inhibited by pyridine-2,4-dicarboxylic acid, 5-hydroxyisophthalic acid and 5,5'-dithiobis(2-nitrobenzoic acid) (Ellman reagent). In terms of biological role, contributes to the degradation of lignin at the level of the protocatechuate 4,5-cleavage pathway. Catalyzes the hydrolysis of 2-pyrone-4,6-dicarboxylate (PDC) to (4E)-oxalomesaconate (OMA). The keto form of OMA can tautomerize into the enol form, 4-carboxy-2-hydroxymuconate (CHM), under certain pH conditions. Also catalyzes the reverse reaction. Is essential for the growth of Sphingobium sp. SYK-6 on vanillate but is not responsible for the growth of this strain on syringate. This Sphingobium sp. (strain NBRC 103272 / SYK-6) protein is 2-pyrone-4,6-dicarboxylate hydrolase.